Here is a 370-residue protein sequence, read N- to C-terminus: Capsular polysaccharide phosphotransferase (370 aa).

Belongs to the stealth family.

Part of a capsular polysaccharide synthesis locus. This Actinobacillus suis protein is Capsular polysaccharide phosphotransferase.